Consider the following 2283-residue polypeptide: Serine-rich adhesin for platelets (2283 aa).

The signal sequence occupies residues 1–89; it reads MSKRQKAFHD…VNMLHDQQAF (89 aa). Residues 90 to 230 are serine-rich repeat region 1, SRR1; it reads AASDAPLTSE…KTSTTSTSTA (141 aa). Polar residues predominate over residues 100-111; sequence LNTQSETVGNQN. Disordered stretches follow at residues 100 to 230, 691 to 721, and 751 to 2255; these read LNTQ…TSTA, NSGNAVTNKSTGLPSGLTFDSTNNTISGTPT, and NSMS…GLLG. Residues 112 to 128 show a composition bias toward low complexity; the sequence is STTIEASTSTADSTSVT. Positions 129–140 are enriched in polar residues; sequence KNSSSVQTSNSD. Positions 149 to 229 are enriched in low complexity; it reads NVTSTTNSTS…NKTSTTSTST (81 aa). Positions 231–751 are non-repeat region (NRR); it reads PVKLRTFSRL…TTFKYEVTRN (521 aa). Composition is skewed to low complexity over residues 752–1323, 1330–1894, and 1901–2225; these read SMSD…SDSI, SLSA…QSSS, and DSMS…SATS. The tract at residues 752-2244 is serine-rich repeat region 2, SRR2; the sequence is SMSDSVSTSG…AQSEERLPDT (1493 aa). The LPXTG sorting signal motif lies at 2241 to 2245; that stretch reads LPDTG. Thr2244 carries the pentaglycyl murein peptidoglycan amidated threonine modification. Residues 2245–2283 constitute a propeptide, removed by sortase; that stretch reads GESIKQNGLLGGIMTLLVGLGLMKRKKKKDENDQDDSQA.

It belongs to the serine-rich repeat protein (SRRP) family. In terms of processing, proteolytically cleaved by a metalloprotease. Glycosylated. It is probable that most of the Ser residues in SSR1 and SSR2 are O-GlcNAcylated. Sequential glycosylation by sugar transferases are able to generate complex sugar polymorphisms.

Its subcellular location is the secreted. It is found in the cell wall. In terms of biological role, mediates binding to human platelets, possibly through a receptor-ligand interaction. Probably associated with virulence in endovascular infection. This Staphylococcus aureus protein is Serine-rich adhesin for platelets (sraP).